The primary structure comprises 556 residues: Energy-dependent translational throttle protein EttA (556 aa).

ABC transporter domains lie at 7–260 (YTMH…EQEQ) and 325–551 (IEVQ…RIKY). Position 40–47 (40–47 (GLNGAGKS)) interacts with ATP. The tract at residues 96-140 (SEVKNALTRLDEVYALYADPDADFDKLAAEQANLEAIIQAHDGHN) is arm. The tract at residues 243–323 (GNYSSWLEQK…IPPGPRLGDK (81 aa)) is ptIM. An ATP-binding site is contributed by 357 to 364 (GANGAGKS).

The protein belongs to the ABC transporter superfamily. ABCF family. Translational throttle EttA subfamily. In terms of assembly, monomer. Probably contacts ribosomal proteins L1, L5, L33 and S7, the 16S and 23S rRNA and the P-site containing tRNA(fMet).

It is found in the cytoplasm. It carries out the reaction ATP + H2O = ADP + phosphate + H(+). A translation factor that gates the progression of the 70S ribosomal initiation complex (IC, containing tRNA(fMet) in the P-site) into the translation elongation cycle by using a mechanism sensitive to the ATP/ADP ratio. Binds to the 70S ribosome E-site where it modulates the state of the translating ribosome during subunit translocation. ATP hydrolysis probably frees it from the ribosome, which can enter the elongation phase. This is Energy-dependent translational throttle protein EttA from Haemophilus influenzae (strain ATCC 51907 / DSM 11121 / KW20 / Rd).